The following is an 89-amino-acid chain: Small ribosomal subunit protein uS15 (89 aa).

Belongs to the universal ribosomal protein uS15 family. Part of the 30S ribosomal subunit. Forms a bridge to the 50S subunit in the 70S ribosome, contacting the 23S rRNA.

Its function is as follows. One of the primary rRNA binding proteins, it binds directly to 16S rRNA where it helps nucleate assembly of the platform of the 30S subunit by binding and bridging several RNA helices of the 16S rRNA. Functionally, forms an intersubunit bridge (bridge B4) with the 23S rRNA of the 50S subunit in the ribosome. This is Small ribosomal subunit protein uS15 from Nitratiruptor sp. (strain SB155-2).